Reading from the N-terminus, the 338-residue chain is MEKQTVAVLGPGSWGTALSQVLNDNGHEVRIWGNLPEQINEINTHHTNKHYFKDVVLDENIIAYTDLAETLKNVDAILFVVPTKVTRLVAQQVAQTLDHKVIIMHASKGLEPDSHKRLSTILEEEIPEHLRSDIVVVSGPSHAEETIVRDLTLITAASKDLQTAQYVQELFSNHYFRLYTNTDVIGVETAGALKNIIAVGAGALHGLGFGDNAKAAIIARGLAEITRLGVALGASPLTYSGLSGVGDLIVTGTSIHSRNWRAGDALGRGESLADIEANMGMVIEGISTTRAAYELAQELGVYMPITQAIYQVIYHGTNIKDAIYDIMNNEFKAENEWS.

Residues serine 13, tryptophan 14, and lysine 108 each coordinate NADPH. The sn-glycerol 3-phosphate site is built by lysine 108, glycine 139, and serine 141. NADPH is bound at residue alanine 143. 5 residues coordinate sn-glycerol 3-phosphate: lysine 194, aspartate 247, serine 257, arginine 258, and asparagine 259. Lysine 194 acts as the Proton acceptor in catalysis. Arginine 258 provides a ligand contact to NADPH. Residues valine 282 and glutamate 284 each contribute to the NADPH site.

It belongs to the NAD-dependent glycerol-3-phosphate dehydrogenase family.

It is found in the cytoplasm. The enzyme catalyses sn-glycerol 3-phosphate + NAD(+) = dihydroxyacetone phosphate + NADH + H(+). It catalyses the reaction sn-glycerol 3-phosphate + NADP(+) = dihydroxyacetone phosphate + NADPH + H(+). The protein operates within membrane lipid metabolism; glycerophospholipid metabolism. Catalyzes the reduction of the glycolytic intermediate dihydroxyacetone phosphate (DHAP) to sn-glycerol 3-phosphate (G3P), the key precursor for phospholipid synthesis. In Streptococcus pneumoniae (strain JJA), this protein is Glycerol-3-phosphate dehydrogenase [NAD(P)+].